Reading from the N-terminus, the 294-residue chain is Oligopeptide transport system permease protein OppC (294 aa).

The next 6 membrane-spanning stretches (helical) occupy residues 27–47, 94–114, 127–147, 151–171, 202–224, and 260–280; these read MIST…SMFL, IAFA…VITG, FTDF…VTII, NSWS…TRLI, IWPN…NIGL, and WTWV…IFIG. Residues 88–280 form the ABC transmembrane type-1 domain; it reads ARNSFNIAFA…IVVLAIIFIG (193 aa).

It belongs to the binding-protein-dependent transport system permease family. OppBC subfamily. The complex is composed of two ATP-binding proteins (OppD and OppF), two transmembrane proteins (OppB and OppC) and a solute-binding protein (OppA).

It localises to the cell membrane. In terms of biological role, part of the ABC transporter complex OppABCDF involved in the uptake of oligopeptides. Probably responsible for the translocation of the substrate across the membrane. Essential for uptake of peptides larger than three amino acids and for growth in milk. The sequence is that of Oligopeptide transport system permease protein OppC (oppC) from Lactococcus lactis subsp. lactis (strain IL1403) (Streptococcus lactis).